Reading from the N-terminus, the 221-residue chain is UPF0758 protein KPN78578_39390 (221 aa).

Residues 99–221 (ALVTPSMTRE…YVSFAERGWI (123 aa)) enclose the MPN domain. Zn(2+) contacts are provided by His-170, His-172, and Asp-183. A JAMM motif motif is present at residues 170–183 (HNHPSGSPEPSQAD).

Belongs to the UPF0758 family. YicR subfamily.

This Klebsiella pneumoniae subsp. pneumoniae (strain ATCC 700721 / MGH 78578) protein is UPF0758 protein KPN78578_39390.